The following is a 209-amino-acid chain: PRA1 family protein A3 (209 aa).

The next 4 membrane-spanning stretches (helical) occupy residues 51–72 (LYYY…ALIT), 76–98 (AILG…AATF), 143–163 (LVFV…SCGL), and 164–184 (LWVL…ASLR).

Belongs to the PRA1 family.

The protein localises to the endosome membrane. In terms of biological role, may be involved in both secretory and endocytic intracellular trafficking in the endosomal/prevacuolar compartments. The chain is PRA1 family protein A3 (PRA1A3) from Arabidopsis thaliana (Mouse-ear cress).